The following is a 119-amino-acid chain: Large ribosomal subunit protein bL20 (119 aa).

It belongs to the bacterial ribosomal protein bL20 family.

Functionally, binds directly to 23S ribosomal RNA and is necessary for the in vitro assembly process of the 50S ribosomal subunit. It is not involved in the protein synthesizing functions of that subunit. The sequence is that of Large ribosomal subunit protein bL20 from Lactococcus lactis subsp. cremoris (strain MG1363).